Here is a 424-residue protein sequence, read N- to C-terminus: Acetyl-CoA acetyltransferase, mitochondrial (424 aa).

The N-terminal 30 residues, 1 to 30, are a transit peptide targeting the mitochondrion; the sequence is MAALVALHGVVRRPLLRGLLQEVRCLERSY. An N6-acetyllysine; alternate modification is found at lysine 63. The residue at position 63 (lysine 63) is an N6-succinyllysine; alternate. Position 75 is an N6-succinyllysine (lysine 75). Residue cysteine 123 is the Acyl-thioester intermediate of the active site. An N6-acetyllysine; alternate mark is found at lysine 171, lysine 178, lysine 187, and lysine 199. 4 positions are modified to N6-succinyllysine; alternate: lysine 171, lysine 178, lysine 187, and lysine 199. The residue at position 204 (serine 204) is a Phosphoserine. Residue tyrosine 216 coordinates CoA. K(+) is bound at residue tyrosine 216. An N6-acetyllysine; alternate mark is found at lysine 220 and lysine 227. Lysine 220 and lysine 227 each carry N6-succinyllysine; alternate. N6-succinyllysine is present on lysine 240. Lysine 242 carries the N6-acetyllysine; alternate modification. An N6-succinyllysine; alternate modification is found at lysine 242. N6-acetyllysine is present on residues lysine 248 and lysine 254. Residues 255–257 and lysine 260 contribute to the CoA site; that span reads RVD. At lysine 260 the chain carries N6-acetyllysine; alternate. An N6-succinyllysine; alternate modification is found at lysine 260. 2 positions are modified to N6-succinyllysine: lysine 263 and lysine 265. Lysine 270 bears the N6-acetyllysine mark. K(+)-binding residues include alanine 277, alanine 278, and alanine 280. A CoA-binding site is contributed by serine 281. The residue at position 335 (lysine 335) is an N6-acetyllysine. A K(+)-binding site is contributed by valine 378. The active-site Proton donor/acceptor is cysteine 410.

It belongs to the thiolase-like superfamily. Thiolase family. As to quaternary structure, homotetramer. In terms of processing, succinylation at Lys-265, adjacent to a coenzyme A binding site. Desuccinylated by SIRT5.

Its subcellular location is the mitochondrion. It carries out the reaction 2 acetyl-CoA = acetoacetyl-CoA + CoA. The catalysed reaction is propanoyl-CoA + acetyl-CoA = 2-methyl-3-oxobutanoyl-CoA + CoA. It participates in lipid metabolism; fatty acid beta-oxidation. Its activity is regulated as follows. Activated by potassium ions, but not sodium ions. This is one of the enzymes that catalyzes the last step of the mitochondrial beta-oxidation pathway, an aerobic process breaking down fatty acids into acetyl-CoA. Using free coenzyme A/CoA, catalyzes the thiolytic cleavage of medium- to long-chain 3-oxoacyl-CoAs into acetyl-CoA and a fatty acyl-CoA shortened by two carbon atoms. The activity of the enzyme is reversible and it can also catalyze the condensation of two acetyl-CoA molecules into acetoacetyl-CoA. Thereby, it plays a major role in ketone body metabolism. In Mus musculus (Mouse), this protein is Acetyl-CoA acetyltransferase, mitochondrial (Acat1).